A 787-amino-acid chain; its full sequence is Endonuclease MutS2 (787 aa).

Residue 329-336 (GPNTGGKT) participates in ATP binding. One can recognise a Smr domain in the interval 712–787 (INLLGCTVDE…DAGVTIVDFK (76 aa)).

It belongs to the DNA mismatch repair MutS family. MutS2 subfamily. As to quaternary structure, homodimer. Binds to stalled ribosomes, contacting rRNA.

Functionally, endonuclease that is involved in the suppression of homologous recombination and thus may have a key role in the control of bacterial genetic diversity. In terms of biological role, acts as a ribosome collision sensor, splitting the ribosome into its 2 subunits. Detects stalled/collided 70S ribosomes which it binds and splits by an ATP-hydrolysis driven conformational change. Acts upstream of the ribosome quality control system (RQC), a ribosome-associated complex that mediates the extraction of incompletely synthesized nascent chains from stalled ribosomes and their subsequent degradation. Probably generates substrates for RQC. The sequence is that of Endonuclease MutS2 from Lachnospira eligens (strain ATCC 27750 / DSM 3376 / VPI C15-48 / C15-B4) (Eubacterium eligens).